A 354-amino-acid polypeptide reads, in one-letter code: Selenide, water dikinase (354 aa).

Residue C23 is part of the active site. ATP is bound by residues K26 and 54–56 (TAD). Residue D57 coordinates Mg(2+). ATP is bound by residues D74, D97, and 145–147 (GHS). Residue D97 participates in Mg(2+) binding. D233 provides a ligand contact to Mg(2+).

The protein belongs to the selenophosphate synthase 1 family. Class I subfamily. In terms of assembly, homodimer. Requires Mg(2+) as cofactor.

The enzyme catalyses hydrogenselenide + ATP + H2O = selenophosphate + AMP + phosphate + 2 H(+). Functionally, synthesizes selenophosphate from selenide and ATP. In Paraburkholderia xenovorans (strain LB400), this protein is Selenide, water dikinase.